A 449-amino-acid polypeptide reads, in one-letter code: Deoxyguanosinetriphosphate triphosphohydrolase-like protein (449 aa).

The segment at 1 to 27 (MTSSVWQERRHGEDKQRRNDHRSPYQR) is disordered. Positions 7 to 27 (QERRHGEDKQRRNDHRSPYQR) are enriched in basic and acidic residues. The 197-residue stretch at 59-255 (RLTHSLEVSQ…MELADDIAYA (197 aa)) folds into the HD domain.

The protein belongs to the dGTPase family. Type 2 subfamily.

The sequence is that of Deoxyguanosinetriphosphate triphosphohydrolase-like protein from Shewanella baltica (strain OS223).